The primary structure comprises 967 residues: Phosphoenolpyruvate carboxylase (967 aa).

Residue S11 is modified to Phosphoserine. Active-site residues include H172 and K601.

Belongs to the PEPCase type 1 family. In terms of assembly, homotetramer. Mg(2+) is required as a cofactor.

Its subcellular location is the cytoplasm. The enzyme catalyses oxaloacetate + phosphate = phosphoenolpyruvate + hydrogencarbonate. The protein operates within photosynthesis; C3 acid pathway. By light-reversible phosphorylation. Its function is as follows. Through the carboxylation of phosphoenolpyruvate (PEP) it forms oxaloacetate, a four-carbon dicarboxylic acid source for the tricarboxylic acid cycle. The sequence is that of Phosphoenolpyruvate carboxylase (PPCA1) from Flaveria pringlei.